Here is an 82-residue protein sequence, read N- to C-terminus: Small ribosomal subunit protein bS16 (82 aa).

It belongs to the bacterial ribosomal protein bS16 family.

In Blochmanniella floridana, this protein is Small ribosomal subunit protein bS16.